A 294-amino-acid chain; its full sequence is UDP-3-O-acyl-N-acetylglucosamine deacetylase (294 aa).

Positions 75, 232, and 236 each coordinate Zn(2+). The active-site Proton donor is His-259.

The protein belongs to the LpxC family. It depends on Zn(2+) as a cofactor.

The catalysed reaction is a UDP-3-O-[(3R)-3-hydroxyacyl]-N-acetyl-alpha-D-glucosamine + H2O = a UDP-3-O-[(3R)-3-hydroxyacyl]-alpha-D-glucosamine + acetate. It functions in the pathway glycolipid biosynthesis; lipid IV(A) biosynthesis; lipid IV(A) from (3R)-3-hydroxytetradecanoyl-[acyl-carrier-protein] and UDP-N-acetyl-alpha-D-glucosamine: step 2/6. Its function is as follows. Catalyzes the hydrolysis of UDP-3-O-myristoyl-N-acetylglucosamine to form UDP-3-O-myristoylglucosamine and acetate, the committed step in lipid A biosynthesis. The polypeptide is UDP-3-O-acyl-N-acetylglucosamine deacetylase (Campylobacter jejuni subsp. jejuni serotype O:2 (strain ATCC 700819 / NCTC 11168)).